Consider the following 317-residue polypeptide: Cytochrome c biogenesis protein CcsA (317 aa).

8 consecutive transmembrane segments (helical) span residues 9–29, 46–63, 71–91, 98–118, 143–163, 225–245, 258–273, and 286–306; these read ILTHISFSVVSIGITIYLITF, TATAFCLTGLLITRWVYS, LYESLIFLSWSLSIIHKIFDF, LSAITAPSAFFTQGFATSGFL, MVLGYAALLCGSLLSTALLVI, IISLGFIFLTTGILSGAVWAN, ETWAFITWTIFGIYLH, and AIVASMGFLIIWICYFGVNLL.

This sequence belongs to the CcmF/CycK/Ccl1/NrfE/CcsA family. As to quaternary structure, may interact with Ccs1.

Its subcellular location is the plastid. The protein localises to the chloroplast thylakoid membrane. Functionally, required during biogenesis of c-type cytochromes (cytochrome c6 and cytochrome f) at the step of heme attachment. The sequence is that of Cytochrome c biogenesis protein CcsA from Citrus sinensis (Sweet orange).